A 271-amino-acid polypeptide reads, in one-letter code: Endonuclease V (271 aa).

Residues 46–67 (TRTGDAPDVDQTTLSTSADDRT) form a disordered region. Mg(2+) contacts are provided by Asp76 and Asp140.

It belongs to the endonuclease V family. Requires Mg(2+) as cofactor.

Its subcellular location is the cytoplasm. The catalysed reaction is Endonucleolytic cleavage at apurinic or apyrimidinic sites to products with a 5'-phosphate.. In terms of biological role, DNA repair enzyme involved in the repair of deaminated bases. Selectively cleaves double-stranded DNA at the second phosphodiester bond 3' to a deoxyinosine leaving behind the intact lesion on the nicked DNA. The protein is Endonuclease V of Haloarcula marismortui (strain ATCC 43049 / DSM 3752 / JCM 8966 / VKM B-1809) (Halobacterium marismortui).